A 1295-amino-acid chain; its full sequence is DNA-directed RNA polymerase subunit beta' (1295 aa).

4 residues coordinate Zn(2+): Cys-66, Cys-68, Cys-81, and Cys-84. The Mg(2+) site is built by Asp-562, Asp-564, and Asp-566. Positions 901, 975, 982, and 985 each coordinate Zn(2+).

It belongs to the RNA polymerase beta' chain family. The RNAP catalytic core consists of 2 alpha, 1 beta, 1 beta' and 1 omega subunit. When a sigma factor is associated with the core the holoenzyme is formed, which can initiate transcription. Mg(2+) serves as cofactor. It depends on Zn(2+) as a cofactor.

The catalysed reaction is RNA(n) + a ribonucleoside 5'-triphosphate = RNA(n+1) + diphosphate. Its function is as follows. DNA-dependent RNA polymerase catalyzes the transcription of DNA into RNA using the four ribonucleoside triphosphates as substrates. The sequence is that of DNA-directed RNA polymerase subunit beta' from Rubrobacter xylanophilus (strain DSM 9941 / JCM 11954 / NBRC 16129 / PRD-1).